Reading from the N-terminus, the 325-residue chain is MKPILLQGHERSITQIKYNREGDLLFTVAKDPIVNVWYSVNGERLGTYMGHTGAVWCVDADWDTKHVLTGSADNSCRLWDCETGKQLALLKTNSAVRTCGFDFGGNIIMFSTDKQMGYQCFVSFFDLRDPSQIDSNEPYMKIPCNDSKITSAVWGPLGECVIAGHESGELNQYSAKSGEVLVNVKEHSRQINDIQLSRDMTMFVTASKDNTAKLFDSTTLEHQKTFRTERPVNSAALSPNYDHVVLGGGQEAMDVTTTSTRIGKFEARFFHLAFEEEFGRVKGHFGPINSVAFHPDGKSYSSGGEDGYVRIHYFDPQYFEFEFEA.

4 WD repeats span residues 8–47 (GHERSITQIKYNREGDLLFTVAKDPIVNVWYSVNGERLGT), 50–91 (GHTG…ALLK), 144–183 (CNDSKITSAVWGPLGECVIAGHESGELNQYSAKSGEVLVN), and 186–225 (EHSRQINDIQLSRDMTMFVTASKDNTAKLFDSTTLEHQKT). At threonine 219 the chain carries Phosphothreonine. At lysine 264 the chain carries N6-acetyllysine. Residue lysine 282 forms a Glycyl lysine isopeptide (Lys-Gly) (interchain with G-Cter in ubiquitin) linkage. One copy of the WD 5 repeat lies at 283 to 324 (GHFGPINSVAFHPDGKSYSSGGEDGYVRIHYFDPQYFEFEFE). Phosphotyrosine is present on tyrosine 308.

It belongs to the eIF-3 subunit I family. In terms of assembly, component of the eukaryotic translation initiation factor 3 (eIF-3) complex, which is composed of 13 subunits: EIF3A, EIF3B, EIF3C, EIF3D, EIF3E, EIF3F, EIF3G, EIF3H, EIF3I, EIF3J, EIF3K, EIF3L and EIF3M. The eIF-3 complex appears to include 3 stable modules: module A is composed of EIF3A, EIF3B, EIF3G and EIF3I; module B is composed of EIF3F, EIF3H, and EIF3M; and module C is composed of EIF3C, EIF3D, EIF3E, EIF3K and EIF3L. EIF3C of module C binds EIF3B of module A and EIF3H of module B, thereby linking the three modules. EIF3J is a labile subunit that binds to the eIF-3 complex via EIF3B. The eIF-3 complex may interact with RPS6KB1 under conditions of nutrient depletion. Mitogenic stimulation may lead to binding and activation of a complex composed of MTOR and RPTOR, leading to phosphorylation and release of RPS6KB1 and binding of EIF4B to eIF-3. Post-translationally, phosphorylated by TGF-beta type II receptor.

The protein resides in the cytoplasm. Functionally, component of the eukaryotic translation initiation factor 3 (eIF-3) complex, which is required for several steps in the initiation of protein synthesis. The eIF-3 complex associates with the 40S ribosome and facilitates the recruitment of eIF-1, eIF-1A, eIF-2:GTP:methionyl-tRNAi and eIF-5 to form the 43S pre-initiation complex (43S PIC). The eIF-3 complex stimulates mRNA recruitment to the 43S PIC and scanning of the mRNA for AUG recognition. The eIF-3 complex is also required for disassembly and recycling of post-termination ribosomal complexes and subsequently prevents premature joining of the 40S and 60S ribosomal subunits prior to initiation. The eIF-3 complex specifically targets and initiates translation of a subset of mRNAs involved in cell proliferation, including cell cycling, differentiation and apoptosis, and uses different modes of RNA stem-loop binding to exert either translational activation or repression. The sequence is that of Eukaryotic translation initiation factor 3 subunit I (Eif3i) from Mus musculus (Mouse).